Here is a 472-residue protein sequence, read N- to C-terminus: MAGKTLYDKLWDDHVVTQRDDGSCLLYIDRHLLHEVTSPQAFEGLQLAGRQPWRLSANVATPDHNVPTSKKERDQGIAGIEDDTSRIQVQTLDDNCKAFYIVEFGINDIRQGIVHVVGPEQGLTLPGMTVVCGDSHTATHGAFGCLAHGIGTSEVEHVLATQCLVQKKSKNMLVRVDGVLGKGVTPKDVVLAIIGKIGTAGGTGYAIEFGGQVFRDMSIEGRMTVCNMAIEAGARVGMVAVDDKTIEYVKGRSYAPKGEQWEQAVAYWNTLHSDDDAVFDAVVELNGAEIEPQVSWGTSPEMVIPVSKAVPTLEQAKDDVQRNDWTRAYQYMGLNAGQALADIQLDRVFIGSCTNSRIEDIRAAAEVVKGRKVAPSIKQAMIVPGSGLVKQQAEKEGLDKIFLEAGFEWREPGCSMCLAMNADKLQPGEHCASTSNRNFEGRQGNGGRTHLVSPAMAAAAAIAGHFVDVRSF.

3 residues coordinate [4Fe-4S] cluster: cysteine 353, cysteine 414, and cysteine 417.

This sequence belongs to the aconitase/IPM isomerase family. LeuC type 1 subfamily. Heterodimer of LeuC and LeuD. Requires [4Fe-4S] cluster as cofactor.

The enzyme catalyses (2R,3S)-3-isopropylmalate = (2S)-2-isopropylmalate. It functions in the pathway amino-acid biosynthesis; L-leucine biosynthesis; L-leucine from 3-methyl-2-oxobutanoate: step 2/4. Its function is as follows. Catalyzes the isomerization between 2-isopropylmalate and 3-isopropylmalate, via the formation of 2-isopropylmaleate. The protein is 3-isopropylmalate dehydratase large subunit of Acinetobacter baumannii (strain AB0057).